The following is a 239-amino-acid chain: Transcriptional regulatory protein DcuR (239 aa).

In terms of domain architecture, Response regulatory spans 3–121 (NVLIIDDDAM…RFEEALTGWR (119 aa)). D56 is modified (4-aspartylphosphate). The segment at residues 181–200 (TDELANEVNISRVSCRKYLI) is a DNA-binding region (H-T-H motif).

Phosphorylated and activated by DcuS.

It localises to the cytoplasm. Its function is as follows. Member of the two-component regulatory system DcuR/DcuS. Involved in the C4-dicarboxylate-stimulated regulation of the genes encoding the anaerobic fumarate respiratory system (frdABCD; nuoAN; dcuB; dcuC; sdhCDAB; etc.). Weakly regulates the aerobic C4-dicarboxylate transporter dctA. The sequence is that of Transcriptional regulatory protein DcuR (dcuR) from Escherichia coli O157:H7.